We begin with the raw amino-acid sequence, 270 residues long: Exosome complex component rrp43 (270 aa).

Belongs to the RNase PH family. As to quaternary structure, component of the RNA exosome complex. Specifically part of the catalytically inactive RNA exosome core complex (Exo-9) which may associate with the catalytic subunits rrp66 and dis3 in cytoplasmic- and nuclear-specific RNA exosome complex forms. Exo-9 is formed by a hexameric base ring of RNase PH domain-containing subunits and a cap ring consisting of csl4, rrp4 and rrp40.

The protein resides in the cytoplasm. Its subcellular location is the nucleus. It localises to the nucleolus. In terms of biological role, non-catalytic component of the RNA exosome complex which has 3'-&gt;5' exoribonuclease activity and participates in a multitude of cellular RNA processing and degradation events. In the nucleus, the RNA exosome complex is involved in proper maturation of stable RNA species such as rRNA, snRNA and snoRNA, in the elimination of RNA processing by-products and non-coding 'pervasive' transcripts, such as antisense RNA species and cryptic unstable transcripts (CUTs), and of mRNAs with processing defects, thereby limiting or excluding their export to the cytoplasm. In the cytoplasm, the RNA exosome complex is involved in general mRNA turnover and in RNA surveillance pathways, preventing translation of aberrant mRNAs. The catalytic inactive RNA exosome core complex of 9 subunits (Exo-9) is proposed to play a pivotal role in the binding and presentation of RNA for ribonucleolysis, and to serve as a scaffold for the association with catalytic subunits and accessory proteins or complexes. ski6 is part of the hexameric ring of RNase PH domain-containing subunits proposed to form a central channel which threads RNA substrates for degradation. The sequence is that of Exosome complex component rrp43 (rrp43) from Schizosaccharomyces pombe (strain 972 / ATCC 24843) (Fission yeast).